The sequence spans 304 residues: MSQLLTMSELSKEEISEILKDAEDFANGKERKATEQTFVANLFFENSTRTRFSFEVAEKRLGLEVLNFSADSSSVQKGETLYDTIRTLESIGAKAVVIRHQQDRYFDELKDKVNIPILNAGDGCGNHPTQCLLDLLTIKQEFGRFEGLKIAIVGDIRHSRVARSNAEALTKLGATIYFASPEEWKDETNTFGTYRSLDELIPEVDVMMLLRVQHERHDHYETDIMKEYHENHGLTMEREERMKEGSIIMHPAPVNRDVEIASELVECKRSRIFKQMENGVYVRMAVLKRALPNVLGGMKHELFV.

Carbamoyl phosphate contacts are provided by arginine 49 and threonine 50. Lysine 77 is a binding site for L-aspartate. Carbamoyl phosphate is bound by residues arginine 99, histidine 127, and glutamine 130. The L-aspartate site is built by arginine 160 and arginine 211. Carbamoyl phosphate is bound by residues alanine 252 and proline 253.

Belongs to the aspartate/ornithine carbamoyltransferase superfamily. ATCase family. In terms of assembly, heterododecamer (2C3:3R2) of six catalytic PyrB chains organized as two trimers (C3), and six regulatory PyrI chains organized as three dimers (R2).

It carries out the reaction carbamoyl phosphate + L-aspartate = N-carbamoyl-L-aspartate + phosphate + H(+). The protein operates within pyrimidine metabolism; UMP biosynthesis via de novo pathway; (S)-dihydroorotate from bicarbonate: step 2/3. Its function is as follows. Catalyzes the condensation of carbamoyl phosphate and aspartate to form carbamoyl aspartate and inorganic phosphate, the committed step in the de novo pyrimidine nucleotide biosynthesis pathway. The protein is Aspartate carbamoyltransferase catalytic subunit of Bacillus cytotoxicus (strain DSM 22905 / CIP 110041 / 391-98 / NVH 391-98).